The sequence spans 155 residues: Large ribosomal subunit protein uL13 (155 aa).

It belongs to the universal ribosomal protein uL13 family. As to quaternary structure, part of the 50S ribosomal subunit.

Its function is as follows. This protein is one of the early assembly proteins of the 50S ribosomal subunit, although it is not seen to bind rRNA by itself. It is important during the early stages of 50S assembly. This chain is Large ribosomal subunit protein uL13, found in Rickettsia bellii (strain OSU 85-389).